Here is a 381-residue protein sequence, read N- to C-terminus: L-lactate dehydrogenase (381 aa).

The FMN hydroxy acid dehydrogenase domain maps to 1–380; that stretch reads MIISSASDYR…KPEALVDLSK (380 aa). Residue Tyr-24 coordinates substrate. The FMN site is built by Ser-106 and Gln-127. Residue Tyr-129 participates in substrate binding. Thr-155 is a binding site for FMN. Arg-164 contacts substrate. Lys-251 is an FMN binding site. His-275 acts as the Proton acceptor in catalysis. Residue Arg-278 coordinates substrate. Position 306–330 (306–330) interacts with FMN; it reads DSGIRNGLDIVRMLALGADATMLGR.

The protein belongs to the FMN-dependent alpha-hydroxy acid dehydrogenase family. FMN is required as a cofactor.

Its subcellular location is the cell inner membrane. It carries out the reaction (S)-lactate + A = pyruvate + AH2. Catalyzes the conversion of L-lactate to pyruvate. Is coupled to the respiratory chain. The polypeptide is L-lactate dehydrogenase (Haemophilus influenzae (strain PittEE)).